We begin with the raw amino-acid sequence, 473 residues long: Bifunctional protein HldE (473 aa).

Residues 1 to 318 (MKLSMPRFDQ…RAIQREEGSE (318 aa)) are ribokinase. 194–197 (NLSE) is an ATP binding site. Residue aspartate 263 is part of the active site. A cytidylyltransferase region spans residues 343–473 (FTNGCFDILH…TAIVEKIRKN (131 aa)).

In the N-terminal section; belongs to the carbohydrate kinase PfkB family. This sequence in the C-terminal section; belongs to the cytidylyltransferase family. Homodimer.

It catalyses the reaction D-glycero-beta-D-manno-heptose 7-phosphate + ATP = D-glycero-beta-D-manno-heptose 1,7-bisphosphate + ADP + H(+). The enzyme catalyses D-glycero-beta-D-manno-heptose 1-phosphate + ATP + H(+) = ADP-D-glycero-beta-D-manno-heptose + diphosphate. It participates in nucleotide-sugar biosynthesis; ADP-L-glycero-beta-D-manno-heptose biosynthesis; ADP-L-glycero-beta-D-manno-heptose from D-glycero-beta-D-manno-heptose 7-phosphate: step 1/4. Its pathway is nucleotide-sugar biosynthesis; ADP-L-glycero-beta-D-manno-heptose biosynthesis; ADP-L-glycero-beta-D-manno-heptose from D-glycero-beta-D-manno-heptose 7-phosphate: step 3/4. Catalyzes the phosphorylation of D-glycero-D-manno-heptose 7-phosphate at the C-1 position to selectively form D-glycero-beta-D-manno-heptose-1,7-bisphosphate. Its function is as follows. Catalyzes the ADP transfer from ATP to D-glycero-beta-D-manno-heptose 1-phosphate, yielding ADP-D-glycero-beta-D-manno-heptose. This Pseudomonas putida (strain ATCC 47054 / DSM 6125 / CFBP 8728 / NCIMB 11950 / KT2440) protein is Bifunctional protein HldE.